Reading from the N-terminus, the 304-residue chain is Protease HtpX homolog 1 (304 aa).

2 helical membrane passes run 17-37 (VTLF…IALL) and 39-59 (SWVL…WFSD). His-140 provides a ligand contact to Zn(2+). The active site involves Glu-141. His-144 is a Zn(2+) binding site. Transmembrane regions (helical) follow at residues 151–171 (AVIT…RFAF) and 186–206 (AVLA…FLLI). Glu-214 lines the Zn(2+) pocket.

The protein belongs to the peptidase M48B family. Requires Zn(2+) as cofactor.

It is found in the cell membrane. The sequence is that of Protease HtpX homolog 1 from Streptomyces coelicolor (strain ATCC BAA-471 / A3(2) / M145).